Consider the following 621-residue polypeptide: tRNA uridine 5-carboxymethylaminomethyl modification enzyme MnmG (621 aa).

Residue 9-14 participates in FAD binding; that stretch reads GGGHAG. 270 to 284 contributes to the NAD(+) binding site; that stretch reads GPRYCPSIEDKIVKF.

It belongs to the MnmG family. Homodimer. Heterotetramer of two MnmE and two MnmG subunits. FAD serves as cofactor.

Its subcellular location is the cytoplasm. NAD-binding protein involved in the addition of a carboxymethylaminomethyl (cmnm) group at the wobble position (U34) of certain tRNAs, forming tRNA-cmnm(5)s(2)U34. The sequence is that of tRNA uridine 5-carboxymethylaminomethyl modification enzyme MnmG from Borrelia garinii subsp. bavariensis (strain ATCC BAA-2496 / DSM 23469 / PBi) (Borreliella bavariensis).